A 180-amino-acid chain; its full sequence is Transcription factor IBH1-like 1 (180 aa).

The bHLH domain occupies 110 to 160; that stretch reads KSKSASEEAAAKAKRLVKRRTQGLRNVVPGGELMSNDVLLLQETLDYIVSL.

Belongs to the bHLH protein family.

It localises to the nucleus. Functionally, functions redundandly with IBH1/BHLH158 in a regulation node known as the incoherent feed-forward loop (FFL). Acts as transcriptional repressor that negatively regulates cell and organ elongation in response to gibberellin (GA) and brassinosteroid (BR) signaling. The protein is Transcription factor IBH1-like 1 of Arabidopsis thaliana (Mouse-ear cress).